A 338-amino-acid polypeptide reads, in one-letter code: Tryptophan--tRNA ligase (338 aa).

ATP is bound by residues 18–20 and 26–27; these read QPS and GN. Positions 19 to 27 match the 'HIGH' region motif; sequence PSGNLTIGN. Asp-142 contributes to the L-tryptophan binding site. ATP-binding positions include 154–156, Ile-193, and 202–206; these read GND and KMSKS. Positions 202–206 match the 'KMSKS' region motif; that stretch reads KMSKS.

This sequence belongs to the class-I aminoacyl-tRNA synthetase family. As to quaternary structure, homodimer.

It localises to the cytoplasm. It carries out the reaction tRNA(Trp) + L-tryptophan + ATP = L-tryptophyl-tRNA(Trp) + AMP + diphosphate + H(+). Catalyzes the attachment of tryptophan to tRNA(Trp). In Clostridium tetani (strain Massachusetts / E88), this protein is Tryptophan--tRNA ligase.